A 308-amino-acid chain; its full sequence is Ribonuclease HIII (308 aa).

One can recognise an RNase H type-2 domain in the interval 92 to 308 (DNHIGSDEAG…ANTQKAQKLL (217 aa)). The a divalent metal cation site is built by Asp98, Glu99, and Asp204.

Belongs to the RNase HII family. RnhC subfamily. Mn(2+) serves as cofactor. Requires Mg(2+) as cofactor.

The protein localises to the cytoplasm. The catalysed reaction is Endonucleolytic cleavage to 5'-phosphomonoester.. Functionally, endonuclease that specifically degrades the RNA of RNA-DNA hybrids. In Oceanobacillus iheyensis (strain DSM 14371 / CIP 107618 / JCM 11309 / KCTC 3954 / HTE831), this protein is Ribonuclease HIII.